Reading from the N-terminus, the 203-residue chain is Dephospho-CoA kinase (203 aa).

Residues 6 to 203 (RLGITGGIAC…SLLGRGGKGG (198 aa)) form the DPCK domain. 14–19 (ACGKSV) contacts ATP.

This sequence belongs to the CoaE family.

The protein localises to the cytoplasm. The enzyme catalyses 3'-dephospho-CoA + ATP = ADP + CoA + H(+). It functions in the pathway cofactor biosynthesis; coenzyme A biosynthesis; CoA from (R)-pantothenate: step 5/5. In terms of biological role, catalyzes the phosphorylation of the 3'-hydroxyl group of dephosphocoenzyme A to form coenzyme A. The sequence is that of Dephospho-CoA kinase from Thermosynechococcus vestitus (strain NIES-2133 / IAM M-273 / BP-1).